We begin with the raw amino-acid sequence, 166 residues long: Deglycase TK1284 (166 aa).

Residues 1–166 enclose the PfpI endopeptidase domain; that stretch reads MKVLILSADG…WMREFVKLLR (166 aa). The active site involves His101.

The protein belongs to the peptidase C56 family. As to quaternary structure, homohexamer formed by a dimer of trimers that assemble into a hollow ring structure.

Its subcellular location is the cytoplasm. It carries out the reaction N(omega)-(1-hydroxy-2-oxopropyl)-L-arginyl-[protein] + H2O = lactate + L-arginyl-[protein] + H(+). The enzyme catalyses N(6)-(1-hydroxy-2-oxopropyl)-L-lysyl-[protein] + H2O = lactate + L-lysyl-[protein] + H(+). The catalysed reaction is S-(1-hydroxy-2-oxopropyl)-L-cysteinyl-[protein] + H2O = lactate + L-cysteinyl-[protein] + H(+). It catalyses the reaction N(omega)-(1-hydroxy-2-oxoethyl)-L-arginyl-[protein] + H2O = L-arginyl-[protein] + glycolate + H(+). It carries out the reaction N(6)-(1-hydroxy-2-oxoethyl)-L-lysyl-[protein] + H2O = glycolate + L-lysyl-[protein] + H(+). The enzyme catalyses S-(1-hydroxy-2-oxoethyl)-L-cysteinyl-[protein] + H2O = glycolate + L-cysteinyl-[protein] + H(+). Deglycase that catalyzes the deglycation of the Maillard adducts formed between amino groups of proteins and reactive carbonyl groups of glyoxals. Thus, functions as a protein deglycase that repairs methylglyoxal- and glyoxal-glycated proteins, and releases repaired proteins and lactate or glycolate, respectively. Deglycates cysteine, arginine and lysine residues in proteins, and thus reactivates these proteins by reversing glycation by glyoxals. Acts on early glycation intermediates (hemithioacetals and aminocarbinols), preventing the formation of advanced glycation endproducts (AGE) that cause irreversible damage. Also displays proteolytic activity. The chain is Deglycase TK1284 from Thermococcus kodakarensis (strain ATCC BAA-918 / JCM 12380 / KOD1) (Pyrococcus kodakaraensis (strain KOD1)).